Here is a 139-residue protein sequence, read N- to C-terminus: Protein Turandot B (139 aa).

The N-terminal stretch at 1–21 is a signal peptide; it reads MNFNMSMICFALLLIVTLCSA.

This sequence belongs to the Turandot family.

It localises to the secreted. Functionally, a humoral factor that may play a role in stress tolerance. The protein is Protein Turandot B of Drosophila yakuba (Fruit fly).